A 417-amino-acid polypeptide reads, in one-letter code: NADH-quinone oxidoreductase subunit D (417 aa).

It belongs to the complex I 49 kDa subunit family. As to quaternary structure, NDH-1 is composed of 14 different subunits. Subunits NuoB, C, D, E, F, and G constitute the peripheral sector of the complex.

It localises to the cell inner membrane. The enzyme catalyses a quinone + NADH + 5 H(+)(in) = a quinol + NAD(+) + 4 H(+)(out). Functionally, NDH-1 shuttles electrons from NADH, via FMN and iron-sulfur (Fe-S) centers, to quinones in the respiratory chain. The immediate electron acceptor for the enzyme in this species is believed to be ubiquinone. Couples the redox reaction to proton translocation (for every two electrons transferred, four hydrogen ions are translocated across the cytoplasmic membrane), and thus conserves the redox energy in a proton gradient. In Nitrosococcus oceani (strain ATCC 19707 / BCRC 17464 / JCM 30415 / NCIMB 11848 / C-107), this protein is NADH-quinone oxidoreductase subunit D.